Consider the following 511-residue polypeptide: Glucans biosynthesis protein G (511 aa).

The first 22 residues, 1–22 (MMKMRWLSAAVMLTLYTSSSWA), serve as a signal peptide directing secretion.

The protein belongs to the OpgD/OpgG family.

It is found in the periplasm. The protein operates within glycan metabolism; osmoregulated periplasmic glucan (OPG) biosynthesis. Functionally, involved in the biosynthesis of osmoregulated periplasmic glucans (OPGs). The sequence is that of Glucans biosynthesis protein G from Escherichia coli (strain K12 / MC4100 / BW2952).